The following is a 220-amino-acid chain: Pyrrolidone-carboxylate peptidase (220 aa).

Active-site residues include Glu-80, Cys-143, and His-167.

Belongs to the peptidase C15 family. Homotetramer.

It localises to the cytoplasm. The catalysed reaction is Release of an N-terminal pyroglutamyl group from a polypeptide, the second amino acid generally not being Pro.. Its function is as follows. Removes 5-oxoproline from various penultimate amino acid residues except L-proline. This is Pyrrolidone-carboxylate peptidase (pcp) from Thermococcus litoralis (strain ATCC 51850 / DSM 5473 / JCM 8560 / NS-C).